The following is a 300-amino-acid chain: Bifunctional protein FolD (300 aa).

Residues 172 to 174 (GRS), Ser-206, and Ile-247 contribute to the NADP(+) site.

It belongs to the tetrahydrofolate dehydrogenase/cyclohydrolase family. In terms of assembly, homodimer.

The enzyme catalyses (6R)-5,10-methylene-5,6,7,8-tetrahydrofolate + NADP(+) = (6R)-5,10-methenyltetrahydrofolate + NADPH. It carries out the reaction (6R)-5,10-methenyltetrahydrofolate + H2O = (6R)-10-formyltetrahydrofolate + H(+). Its pathway is one-carbon metabolism; tetrahydrofolate interconversion. In terms of biological role, catalyzes the oxidation of 5,10-methylenetetrahydrofolate to 5,10-methenyltetrahydrofolate and then the hydrolysis of 5,10-methenyltetrahydrofolate to 10-formyltetrahydrofolate. This Rhodopirellula baltica (strain DSM 10527 / NCIMB 13988 / SH1) protein is Bifunctional protein FolD.